A 138-amino-acid chain; its full sequence is Large ribosomal subunit protein uL16 (138 aa).

This sequence belongs to the universal ribosomal protein uL16 family. In terms of assembly, part of the 50S ribosomal subunit.

Its function is as follows. Binds 23S rRNA and is also seen to make contacts with the A and possibly P site tRNAs. This Chlamydia felis (strain Fe/C-56) (Chlamydophila felis) protein is Large ribosomal subunit protein uL16.